Consider the following 228-residue polypeptide: Tol-Pal system protein TolQ (228 aa).

A run of 3 helical transmembrane segments spans residues 16–36 (IVVQ…WAII), 137–157 (VSPY…FMAL), and 172–192 (IAEA…AVMA).

Belongs to the ExbB/TolQ family. As to quaternary structure, the Tol-Pal system is composed of five core proteins: the inner membrane proteins TolA, TolQ and TolR, the periplasmic protein TolB and the outer membrane protein Pal. They form a network linking the inner and outer membranes and the peptidoglycan layer.

It localises to the cell inner membrane. Functionally, part of the Tol-Pal system, which plays a role in outer membrane invagination during cell division and is important for maintaining outer membrane integrity. The chain is Tol-Pal system protein TolQ from Haemophilus influenzae (strain ATCC 51907 / DSM 11121 / KW20 / Rd).